A 104-amino-acid polypeptide reads, in one-letter code: Nucleoid-associated protein Ccon26_18480 (104 aa).

Residues 16–34 show a composition bias toward basic and acidic residues; that stretch reads DVQKQAKQMEEESKNKEFG. Positions 16 to 38 are disordered; it reads DVQKQAKQMEEESKNKEFGAKSG.

This sequence belongs to the YbaB/EbfC family. In terms of assembly, homodimer.

The protein resides in the cytoplasm. The protein localises to the nucleoid. In terms of biological role, binds to DNA and alters its conformation. May be involved in regulation of gene expression, nucleoid organization and DNA protection. The polypeptide is Nucleoid-associated protein Ccon26_18480 (Campylobacter concisus (strain 13826)).